Here is a 307-residue protein sequence, read N- to C-terminus: HPr kinase/phosphorylase (307 aa).

Catalysis depends on residues His-136 and Lys-157. 151 to 158 (GESGIGKS) provides a ligand contact to ATP. Ser-158 is a binding site for Mg(2+). The active-site Proton acceptor; for phosphorylation activity. Proton donor; for dephosphorylation activity is the Asp-175. The segment at 198–207 (LEVRGMGIID) is important for the catalytic mechanism of both phosphorylation and dephosphorylation. Residue Glu-199 coordinates Mg(2+). Arg-240 is a catalytic residue. Residues 261–266 (PIRPGR) are important for the catalytic mechanism of dephosphorylation.

The protein belongs to the HPrK/P family. In terms of assembly, homohexamer. The cofactor is Mg(2+).

The enzyme catalyses [HPr protein]-L-serine + ATP = [HPr protein]-O-phospho-L-serine + ADP + H(+). It carries out the reaction [HPr protein]-O-phospho-L-serine + phosphate + H(+) = [HPr protein]-L-serine + diphosphate. Its function is as follows. Catalyzes the ATP- as well as the pyrophosphate-dependent phosphorylation of a specific serine residue in HPr, a phosphocarrier protein of the phosphoenolpyruvate-dependent sugar phosphotransferase system (PTS). HprK/P also catalyzes the pyrophosphate-producing, inorganic phosphate-dependent dephosphorylation (phosphorolysis) of seryl-phosphorylated HPr (P-Ser-HPr). The two antagonistic activities of HprK/P are regulated by several intracellular metabolites, which change their concentration in response to the absence or presence of rapidly metabolisable carbon sources (glucose, fructose, etc.) in the growth medium. Therefore, by controlling the phosphorylation state of HPr, HPrK/P is a sensor enzyme that plays a major role in the regulation of carbon metabolism and sugar transport: it mediates carbon catabolite repression (CCR), and regulates PTS-catalyzed carbohydrate uptake and inducer exclusion. This is HPr kinase/phosphorylase from Clostridium perfringens (strain 13 / Type A).